The sequence spans 536 residues: Probable monofunctional riboflavin biosynthesis protein RIBA 3, chloroplastic (536 aa).

The transit peptide at Met-1–Arg-43 directs the protein to the chloroplast. Residues Cys-44–Lys-310 are inactive DHBP synthase. D-ribulose 5-phosphate contacts are provided by residues Gly-133–Asp-134, Asp-138, and Arg-248–Thr-252. The GTP cyclohydrolase II stretch occupies residues Arg-311–Asn-536. Residue Arg-361–Glu-365 participates in GTP binding. 3 residues coordinate Zn(2+): Cys-366, Cys-377, and Cys-379. Residues Gln-382, Glu-405–Arg-407, and Thr-427 each bind GTP. Catalysis depends on Asp-439, which acts as the Proton acceptor; for GTP cyclohydrolase activity. Arg-441 functions as the Nucleophile; for GTP cyclohydrolase activity in the catalytic mechanism. The GTP site is built by Thr-462 and Lys-467. The interval Tyr-507–Asn-536 is disordered. Positions Ile-525–Asn-536 are enriched in acidic residues.

The protein in the N-terminal section; belongs to the DHBP synthase family. This sequence in the C-terminal section; belongs to the GTP cyclohydrolase II family. Zn(2+) serves as cofactor.

It is found in the plastid. The protein resides in the chloroplast. The catalysed reaction is GTP + 4 H2O = 2,5-diamino-6-hydroxy-4-(5-phosphoribosylamino)-pyrimidine + formate + 2 phosphate + 3 H(+). It functions in the pathway cofactor biosynthesis; riboflavin biosynthesis; 5-amino-6-(D-ribitylamino)uracil from GTP: step 1/4. In terms of biological role, involved in riboflavin biosynthesis. Catalyzes the conversion of GTP to 2,5-diamino-6-ribosylamino-4(3H)-pyrimidinone 5'-phosphate (DARP), formate and pyrophosphate. The protein is Probable monofunctional riboflavin biosynthesis protein RIBA 3, chloroplastic (RIBA3) of Oryza sativa subsp. japonica (Rice).